We begin with the raw amino-acid sequence, 197 residues long: Thymidine kinase (197 aa).

Residues 9–16 (AAMNAGKS) and 83–86 (DESQ) contribute to the ATP site. Glutamate 84 serves as the catalytic Proton acceptor. Zn(2+) contacts are provided by cysteine 141, cysteine 143, cysteine 178, and cysteine 181.

It belongs to the thymidine kinase family. Homotetramer.

It is found in the cytoplasm. It carries out the reaction thymidine + ATP = dTMP + ADP + H(+). The protein is Thymidine kinase of Albidiferax ferrireducens (strain ATCC BAA-621 / DSM 15236 / T118) (Rhodoferax ferrireducens).